A 337-amino-acid chain; its full sequence is Anthranilate phosphoribosyltransferase (337 aa).

5-phospho-alpha-D-ribose 1-diphosphate is bound by residues Gly82, 85 to 86 (GD), Thr90, 92 to 95 (NIST), 110 to 118 (KHGNRAMSS), and Thr122. Gly82 serves as a coordination point for anthranilate. A Mg(2+)-binding site is contributed by Ser94. Position 113 (Asn113) interacts with anthranilate. Residue Arg168 coordinates anthranilate. Positions 226 and 227 each coordinate Mg(2+).

This sequence belongs to the anthranilate phosphoribosyltransferase family. As to quaternary structure, homodimer. The cofactor is Mg(2+).

The enzyme catalyses N-(5-phospho-beta-D-ribosyl)anthranilate + diphosphate = 5-phospho-alpha-D-ribose 1-diphosphate + anthranilate. The protein operates within amino-acid biosynthesis; L-tryptophan biosynthesis; L-tryptophan from chorismate: step 2/5. Functionally, catalyzes the transfer of the phosphoribosyl group of 5-phosphorylribose-1-pyrophosphate (PRPP) to anthranilate to yield N-(5'-phosphoribosyl)-anthranilate (PRA). The chain is Anthranilate phosphoribosyltransferase from Phenylobacterium zucineum (strain HLK1).